A 161-amino-acid chain; its full sequence is Pro-corazonin (161 aa).

An N-terminal signal peptide occupies residues 1–20 (MMRLLLLPLFLFTLSMACMG). Residue Q21 is modified to Pyrrolidone carboxylic acid. Position 31 is an asparagine amide (N31). Residues 70-161 (LERCLAQLQR…SGEPSVFGKH (92 aa)) constitute a propeptide that is removed on maturation. 2 disordered regions span residues 93 to 125 (NANR…TPIQ) and 142 to 161 (VAGS…FGKH). The segment covering 102–117 (SDSGSSRNRANNNNEN) has biased composition (low complexity).

Belongs to the corazonin family.

It is found in the secreted. Functionally, cardioactive peptide. Corazonin is probably involved in the physiological regulation of the heart beat. Clock (Clk) and cycle (cyc) proteins negatively regulate Crz transcription in a cell-specific manner. The protein is Pro-corazonin of Drosophila pseudoobscura pseudoobscura (Fruit fly).